Reading from the N-terminus, the 94-residue chain is uncharacterized protein (94 aa).

Residues 13–67 form the HTH cro/C1-type domain; sequence IQESLDELNVSLREFARAMEIAPSTASRLLTGKAALTPEMAIKLSVVIGSSPQMW. The H-T-H motif DNA-binding region spans 24 to 43; sequence LREFARAMEIAPSTASRLLT.

This sequence belongs to the VapA/VapI family.

This is an uncharacterized protein from Escherichia coli (strain K12).